The sequence spans 68 residues: ADVVTYENKKGNVTFDHKAHAEKLGCDACHEGTPAKIAIDKKSAHKDACKTCHKSNNGPTKCGGCHIK.

Heme is bound by residues His17, His20, Cys26, Cys29, His30, His45, Cys49, Cys52, His53, Cys62, Cys65, and His66.

In terms of processing, binds 3 heme groups per subunit.

Functionally, participates in sulfate respiration coupled with phosphorylation by transferring electrons from the enzyme dehydrogenase to ferredoxin. The chain is Cytochrome c3 (cyd) from Desulfuromonas acetoxidans (Chloropseudomonas ethylica).